A 271-amino-acid polypeptide reads, in one-letter code: Fatty acid elongase 2 (271 aa).

Residues 16–36 (WMIDNVDVAGFLCLLYLGLVW) traverse the membrane as a helical segment. A glycan (N-linked (GlcNAc...) asparagine) is linked at Asn-52. 2 helical membrane-spanning segments follow: residues 59–79 (VFIMWNLFLSTFSVIGMIVVV) and 110–130 (FWVGVFALSKIPELFDTVLLV). The HxxHH motif motif lies at 140–144 (HWYHH). The active-site Nucleophile is His-143. The next 3 helical transmembrane spans lie at 162–182 (IFVFVAMNLTVHAVMYFYFAM), 194–214 (IAPVITIMQILQMIVGSAVTM), and 241–261 (GVVMYLSYLYLFAALFVESYL).

The protein belongs to the ELO family.

It is found in the endoplasmic reticulum membrane. The enzyme catalyses an acyl-CoA + malonyl-CoA + H(+) = a 3-oxoacyl-CoA + CO2 + CoA. It functions in the pathway lipid metabolism; fatty acid biosynthesis. Functionally, involved in the synthesis of fatty acids. Elongates C10 fatty acids to C14. This is Fatty acid elongase 2 from Trypanosoma brucei brucei (strain 927/4 GUTat10.1).